Reading from the N-terminus, the 314-residue chain is Aspartate carbamoyltransferase catalytic subunit (314 aa).

Carbamoyl phosphate is bound by residues R64 and T65. K92 contributes to the L-aspartate binding site. Carbamoyl phosphate contacts are provided by R114, H142, and Q145. L-aspartate is bound by residues R175 and R230. Residues G271 and P272 each contribute to the carbamoyl phosphate site.

It belongs to the aspartate/ornithine carbamoyltransferase superfamily. ATCase family. Heterododecamer (2C3:3R2) of six catalytic PyrB chains organized as two trimers (C3), and six regulatory PyrI chains organized as three dimers (R2).

The catalysed reaction is carbamoyl phosphate + L-aspartate = N-carbamoyl-L-aspartate + phosphate + H(+). Its pathway is pyrimidine metabolism; UMP biosynthesis via de novo pathway; (S)-dihydroorotate from bicarbonate: step 2/3. Its function is as follows. Catalyzes the condensation of carbamoyl phosphate and aspartate to form carbamoyl aspartate and inorganic phosphate, the committed step in the de novo pyrimidine nucleotide biosynthesis pathway. This is Aspartate carbamoyltransferase catalytic subunit from Deinococcus radiodurans (strain ATCC 13939 / DSM 20539 / JCM 16871 / CCUG 27074 / LMG 4051 / NBRC 15346 / NCIMB 9279 / VKM B-1422 / R1).